Reading from the N-terminus, the 378-residue chain is O-methyltransferase dpfgI (378 aa).

S-adenosyl-L-methionine contacts are provided by residues 232–233, Asp257, 279–280, and Arg295; these read GG and NF. Catalysis depends on His299, which acts as the Proton acceptor.

Belongs to the class I-like SAM-binding methyltransferase superfamily. Cation-independent O-methyltransferase family.

The protein operates within secondary metabolite biosynthesis; terpenoid biosynthesis. In terms of biological role, O-methyltransferase; part of the gene cluster that mediates the biosynthesis of diterpenoid pyrones. The first step of the pathway is the synthesis of the alpha-pyrone moiety by the polyketide synthase dpfgA via condensation of one acetyl-CoA starter unit with 3 malonyl-CoA units and 2 methylations. The alpha-pyrone is then combined with geranylgeranyl pyrophosphate (GGPP) formed by the GGPP synthase dpfgD through the action of the prenyltransferase dpfgC to yield a linear alpha-pyrone diterpenoid. Subsequent steps in the diterpenoid pyrone biosynthetic pathway involve the decalin core formation, which is initiated by the epoxidation of the C10-C11 olefin by the FAD-dependent oxidoreductase dpfgE, and is followed by a cyclization cascade catalyzed by the terpene cyclase dpfgB. The short chain dehydrogenase/reductase dpfgG then oxidizes the 8S hydroxy group to a ketone and the short chain dehydrogenase/reductase dpfgH reduces the ketone to the 8R hydroxy group to yield higginsianin B. Higginsianin B is further methylated by the methyltransferase dpfgI to produce the intermediate named FDDP B. The cytochrome P450 monooxygenase dfgpJ then catalyzes a three-step oxidation at C-27 to generate a carboxylic acid as well as C-26 hydroxylation. Finally, methyltransferase dpfgK methylates the carboxylic acid generated by dpfgJ, yielding the final diterpenoid pyrones from the pathway which were named FDDP D and FDDP E. The polypeptide is O-methyltransferase dpfgI (Gibberella zeae (strain ATCC MYA-4620 / CBS 123657 / FGSC 9075 / NRRL 31084 / PH-1) (Wheat head blight fungus)).